The primary structure comprises 381 residues: Queuine tRNA-ribosyltransferase (381 aa).

Aspartate 90 (proton acceptor) is an active-site residue. Residues 90–94 (DSGGF), aspartate 144, glutamine 193, and glycine 221 contribute to the substrate site. Residues 252-258 (GVGTPEN) are RNA binding. Aspartate 271 (nucleophile) is an active-site residue. The segment at 276–280 (TRNAR) is RNA binding; important for wobble base 34 recognition. Zn(2+) is bound by residues cysteine 309, cysteine 311, cysteine 314, and histidine 340.

It belongs to the queuine tRNA-ribosyltransferase family. As to quaternary structure, homodimer. Within each dimer, one monomer is responsible for RNA recognition and catalysis, while the other monomer binds to the replacement base PreQ1. It depends on Zn(2+) as a cofactor.

The catalysed reaction is 7-aminomethyl-7-carbaguanine + guanosine(34) in tRNA = 7-aminomethyl-7-carbaguanosine(34) in tRNA + guanine. The protein operates within tRNA modification; tRNA-queuosine biosynthesis. Its function is as follows. Catalyzes the base-exchange of a guanine (G) residue with the queuine precursor 7-aminomethyl-7-deazaguanine (PreQ1) at position 34 (anticodon wobble position) in tRNAs with GU(N) anticodons (tRNA-Asp, -Asn, -His and -Tyr). Catalysis occurs through a double-displacement mechanism. The nucleophile active site attacks the C1' of nucleotide 34 to detach the guanine base from the RNA, forming a covalent enzyme-RNA intermediate. The proton acceptor active site deprotonates the incoming PreQ1, allowing a nucleophilic attack on the C1' of the ribose to form the product. After dissociation, two additional enzymatic reactions on the tRNA convert PreQ1 to queuine (Q), resulting in the hypermodified nucleoside queuosine (7-(((4,5-cis-dihydroxy-2-cyclopenten-1-yl)amino)methyl)-7-deazaguanosine). The chain is Queuine tRNA-ribosyltransferase from Helicobacter hepaticus (strain ATCC 51449 / 3B1).